We begin with the raw amino-acid sequence, 334 residues long: Ornithine carbamoyltransferase (334 aa).

Residues 57–60 (STRT), glutamine 84, arginine 108, and 135–138 (HPTQ) each bind carbamoyl phosphate. L-ornithine-binding positions include asparagine 168, aspartate 232, and 236-237 (SM). Carbamoyl phosphate is bound by residues 274 to 275 (CL) and arginine 321.

This sequence belongs to the aspartate/ornithine carbamoyltransferase superfamily. OTCase family.

It localises to the cytoplasm. The enzyme catalyses carbamoyl phosphate + L-ornithine = L-citrulline + phosphate + H(+). It functions in the pathway amino-acid degradation; L-arginine degradation via ADI pathway; carbamoyl phosphate from L-arginine: step 2/2. Its function is as follows. Reversibly catalyzes the transfer of the carbamoyl group from carbamoyl phosphate (CP) to the N(epsilon) atom of ornithine (ORN) to produce L-citrulline. The sequence is that of Ornithine carbamoyltransferase from Haemophilus influenzae (strain PittGG).